A 597-amino-acid chain; its full sequence is Arginine--tRNA ligase (597 aa).

The 'HIGH' region motif lies at 124-134; the sequence is PNVAKPLHVGH.

This sequence belongs to the class-I aminoacyl-tRNA synthetase family. Monomer.

Its subcellular location is the cytoplasm. It catalyses the reaction tRNA(Arg) + L-arginine + ATP = L-arginyl-tRNA(Arg) + AMP + diphosphate. The chain is Arginine--tRNA ligase from Agathobacter rectalis (strain ATCC 33656 / DSM 3377 / JCM 17463 / KCTC 5835 / VPI 0990) (Eubacterium rectale).